A 567-amino-acid polypeptide reads, in one-letter code: Maltase A2 (567 aa).

Positions 1-23 are cleaved as a signal peptide; it reads MPKWAHLGLAALLLISTTQEGTA. N30, N124, and N198 each carry an N-linked (GlcNAc...) asparagine glycan. D226 serves as the catalytic Nucleophile. The active-site Proton donor is E298. N312 carries N-linked (GlcNAc...) asparagine glycosylation.

The protein belongs to the glycosyl hydrolase 13 family.

It catalyses the reaction Hydrolysis of terminal, non-reducing (1-&gt;4)-linked alpha-D-glucose residues with release of alpha-D-glucose.. This Drosophila melanogaster (Fruit fly) protein is Maltase A2 (Mal-A2).